Here is a 145-residue protein sequence, read N- to C-terminus: Large ribosomal subunit protein uL11 (145 aa).

This sequence belongs to the universal ribosomal protein uL11 family. As to quaternary structure, part of the ribosomal stalk of the 50S ribosomal subunit. Interacts with L10 and the large rRNA to form the base of the stalk. L10 forms an elongated spine to which L12 dimers bind in a sequential fashion forming a multimeric L10(L12)X complex. One or more lysine residues are methylated.

In terms of biological role, forms part of the ribosomal stalk which helps the ribosome interact with GTP-bound translation factors. This chain is Large ribosomal subunit protein uL11, found in Rickettsia massiliae (strain Mtu5).